Consider the following 649-residue polypeptide: MKFKWDEFFVTGDPLILGAQVSIALSTIAIIFVLTYFKKWKWLWSEWITTVDHKKLGIMYIISAVIMLFRGGVDGLMMRAQLALPNNSFLDSNHYNEIFTTHGTIMIIFMAMPFLIGLINVVVPLQIGARDVAFPYLNNLSFWTFFVGAMLFNISFVIGGSPNAGWTSYMPLASNDMSPGPGENYYLLGLQIAGIGTLMTGINFMVTILKMRTKGMTLMRMPMFTWTTLITMVIIVFAFPVLTVALALLSFDRLFGAHFFTLEAGGMPMLWANLFWIWGHPEVYIVILPAFGIFSEIISSFARKQLFGYKAMVGSIIAISVLSFLVWTHHFFTMGNSASVNSFFSITTMAISIPTGVKIFNWLFTMYKGRISFTTPMLWALAFIPNFVIGGVTGVMLAMAAADYQYHNTYFLVSHFHYVLIAGTVFACFAGFIFWYPKMFGHKLNERIGKWFFWIFMIGFNICFFPQYFLGLQGMPRRIYTYGPNDGWTTLNFISTVGAFMMGVGFLILCYNIYYSFRYSTREISGDSWGVGRTLDWATSSAIPPHYNFAVLPEVKSQDAFLHMKEEKTELYPESKFKKIHMPSNSGRPFFMSVAFGLAGFGLVFEWYWMGVVGLIGVLLCMVLRSFEYDNGYYISVDEIKETERKISE.

Topologically, residues 1 to 15 (MKFKWDEFFVTGDPL) are extracellular. Residues 16–34 (ILGAQVSIALSTIAIIFVL) traverse the membrane as a helical segment. Topologically, residues 35–56 (TYFKKWKWLWSEWITTVDHKKL) are cytoplasmic. The chain crosses the membrane as a helical span at residues 57–75 (GIMYIISAVIMLFRGGVDG). Residues 76–97 (LMMRAQLALPNNSFLDSNHYNE) lie on the Extracellular side of the membrane. Residues 98 to 117 (IFTTHGTIMIIFMAMPFLIG) form a helical membrane-spanning segment. Position 102 (H102) interacts with Fe(II)-heme a. The Cytoplasmic segment spans residues 118–139 (LINVVVPLQIGARDVAFPYLNN). Residues 140–157 (LSFWTFFVGAMLFNISFV) form a helical membrane-spanning segment. The Extracellular portion of the chain corresponds to 158–190 (IGGSPNAGWTSYMPLASNDMSPGPGENYYLLGL). Residues 191–209 (QIAGIGTLMTGINFMVTIL) traverse the membrane as a helical segment. The Cytoplasmic portion of the chain corresponds to 210–227 (KMRTKGMTLMRMPMFTWT). The chain crosses the membrane as a helical span at residues 228-246 (TLITMVIIVFAFPVLTVAL). The Extracellular segment spans residues 247 to 272 (ALLSFDRLFGAHFFTLEAGGMPMLWA). The helical transmembrane segment at 273 to 292 (NLFWIWGHPEVYIVILPAFG) threads the bilayer. Residues H280 and Y284 each coordinate Cu cation. Positions 280-284 (HPEVY) form a cross-link, 1'-histidyl-3'-tyrosine (His-Tyr). Over 293–315 (IFSEIISSFARKQLFGYKAMVGS) the chain is Cytoplasmic. Residues 316–335 (IIAISVLSFLVWTHHFFTMG) form a helical membrane-spanning segment. H329 and H330 together coordinate Cu cation. Residues 336-343 (NSASVNSF) lie on the Extracellular side of the membrane. A helical membrane pass occupies residues 344–362 (FSITTMAISIPTGVKIFNW). At 363-377 (LFTMYKGRISFTTPM) the chain is on the cytoplasmic side. The chain crosses the membrane as a helical span at residues 378 to 397 (LWALAFIPNFVIGGVTGVML). Over 398 to 405 (AMAAADYQ) the chain is Extracellular. The chain crosses the membrane as a helical span at residues 406–425 (YHNTYFLVSHFHYVLIAGTV). A heme a3-binding site is contributed by H415. H417 provides a ligand contact to Fe(II)-heme a. At 426-452 (FACFAGFIFWYPKMFGHKLNERIGKWF) the chain is on the cytoplasmic side. A helical transmembrane segment spans residues 453–472 (FWIFMIGFNICFFPQYFLGL). Residues 473–490 (QGMPRRIYTYGPNDGWTT) lie on the Extracellular side of the membrane. The chain crosses the membrane as a helical span at residues 491 to 510 (LNFISTVGAFMMGVGFLILC). Residues 511–584 (YNIYYSFRYS…SKFKKIHMPS (74 aa)) are Cytoplasmic-facing. Residues 585–604 (NSGRPFFMSVAFGLAGFGLV) form a helical membrane-spanning segment. The Extracellular portion of the chain corresponds to 605-610 (FEWYWM). A helical membrane pass occupies residues 611–631 (GVVGLIGVLLCMVLRSFEYDN). Residues 632–649 (GYYISVDEIKETERKISE) are Cytoplasmic-facing.

It belongs to the heme-copper respiratory oxidase family. It depends on Cu cation as a cofactor. Ferriheme a serves as cofactor. Heme A3. is required as a cofactor.

The protein resides in the cell membrane. The enzyme catalyses 2 a quinol + O2 = 2 a quinone + 2 H2O. It functions in the pathway energy metabolism; oxidative phosphorylation. Functionally, catalyzes quinol oxidation with the concomitant reduction of oxygen to water. Major component for energy conversion during vegetative growth. This Bacillus subtilis (strain 168) protein is Quinol oxidase subunit 1 (qoxB).